The following is a 178-amino-acid chain: Oligoribonuclease (178 aa).

An Exonuclease domain is found at 7–168 (LIWIDLEMTG…DDIRESIAEL (162 aa)). Tyrosine 128 is a catalytic residue.

This sequence belongs to the oligoribonuclease family.

It is found in the cytoplasm. In terms of biological role, 3'-to-5' exoribonuclease specific for small oligoribonucleotides. The protein is Oligoribonuclease of Francisella tularensis subsp. holarctica (strain OSU18).